We begin with the raw amino-acid sequence, 152 residues long: Endoribonuclease YbeY (152 aa).

Positions 114, 118, and 124 each coordinate Zn(2+).

The protein belongs to the endoribonuclease YbeY family. Zn(2+) is required as a cofactor.

It is found in the cytoplasm. Its function is as follows. Single strand-specific metallo-endoribonuclease involved in late-stage 70S ribosome quality control and in maturation of the 3' terminus of the 16S rRNA. This Coxiella burnetii (strain CbuK_Q154) (Coxiella burnetii (strain Q154)) protein is Endoribonuclease YbeY.